The primary structure comprises 122 residues: Large ribosomal subunit protein uL14 (122 aa).

Belongs to the universal ribosomal protein uL14 family. Part of the 50S ribosomal subunit. Forms a cluster with proteins L3 and L19. In the 70S ribosome, L14 and L19 interact and together make contacts with the 16S rRNA in bridges B5 and B8.

Binds to 23S rRNA. Forms part of two intersubunit bridges in the 70S ribosome. The polypeptide is Large ribosomal subunit protein uL14 (Mycolicibacterium smegmatis (strain ATCC 700084 / mc(2)155) (Mycobacterium smegmatis)).